Here is a 490-residue protein sequence, read N- to C-terminus: UDP-N-acetylmuramate--L-alanine ligase (490 aa).

126-132 (GTHGKTT) contacts ATP.

It belongs to the MurCDEF family.

It localises to the cytoplasm. It carries out the reaction UDP-N-acetyl-alpha-D-muramate + L-alanine + ATP = UDP-N-acetyl-alpha-D-muramoyl-L-alanine + ADP + phosphate + H(+). It participates in cell wall biogenesis; peptidoglycan biosynthesis. In terms of biological role, cell wall formation. This is UDP-N-acetylmuramate--L-alanine ligase from Sodalis glossinidius (strain morsitans).